The chain runs to 335 residues: Ketol-acid reductoisomerase (NADP(+)) (335 aa).

A KARI N-terminal Rossmann domain is found at 2-182; sequence AKIIYDNETT…GATRAGVYET (181 aa). Residues 25-28, Arg48, Ser51, Ser53, and 83-86 each bind NADP(+); these read YGSQ and DENQ. His108 is a catalytic residue. Residue Gly134 participates in NADP(+) binding. The KARI C-terminal knotted domain occupies 183–328; the sequence is TFREETETDL…KQIRANIPWL (146 aa). Residues Asp191, Glu195, Glu227, and Glu231 each coordinate Mg(2+). Ser252 is a substrate binding site.

Belongs to the ketol-acid reductoisomerase family. Requires Mg(2+) as cofactor.

The catalysed reaction is (2R)-2,3-dihydroxy-3-methylbutanoate + NADP(+) = (2S)-2-acetolactate + NADPH + H(+). It catalyses the reaction (2R,3R)-2,3-dihydroxy-3-methylpentanoate + NADP(+) = (S)-2-ethyl-2-hydroxy-3-oxobutanoate + NADPH + H(+). Its pathway is amino-acid biosynthesis; L-isoleucine biosynthesis; L-isoleucine from 2-oxobutanoate: step 2/4. It participates in amino-acid biosynthesis; L-valine biosynthesis; L-valine from pyruvate: step 2/4. Functionally, involved in the biosynthesis of branched-chain amino acids (BCAA). Catalyzes an alkyl-migration followed by a ketol-acid reduction of (S)-2-acetolactate (S2AL) to yield (R)-2,3-dihydroxy-isovalerate. In the isomerase reaction, S2AL is rearranged via a Mg-dependent methyl migration to produce 3-hydroxy-3-methyl-2-ketobutyrate (HMKB). In the reductase reaction, this 2-ketoacid undergoes a metal-dependent reduction by NADPH to yield (R)-2,3-dihydroxy-isovalerate. The sequence is that of Ketol-acid reductoisomerase (NADP(+)) from Methanosarcina barkeri (strain Fusaro / DSM 804).